The sequence spans 211 residues: Holliday junction branch migration complex subunit RuvA (211 aa).

Positions 1–64 (MIGRLRGMLV…EDAQLLYGFA (64 aa)) are domain I. The interval 65-143 (NKVERKLFRL…DWQAQQIHLV (79 aa)) is domain II. Residues 144-162 (SDDGVIPEQLSAELSQETT) form a flexible linker region. Positions 163-211 (FVNDNKGDAINALLSLGYKQVQADKAVKSVYNRGMSSENIIRDALKSMI) are domain III.

It belongs to the RuvA family. Homotetramer. Forms an RuvA(8)-RuvB(12)-Holliday junction (HJ) complex. HJ DNA is sandwiched between 2 RuvA tetramers; dsDNA enters through RuvA and exits via RuvB. An RuvB hexamer assembles on each DNA strand where it exits the tetramer. Each RuvB hexamer is contacted by two RuvA subunits (via domain III) on 2 adjacent RuvB subunits; this complex drives branch migration. In the full resolvosome a probable DNA-RuvA(4)-RuvB(12)-RuvC(2) complex forms which resolves the HJ.

Its subcellular location is the cytoplasm. Functionally, the RuvA-RuvB-RuvC complex processes Holliday junction (HJ) DNA during genetic recombination and DNA repair, while the RuvA-RuvB complex plays an important role in the rescue of blocked DNA replication forks via replication fork reversal (RFR). RuvA specifically binds to HJ cruciform DNA, conferring on it an open structure. The RuvB hexamer acts as an ATP-dependent pump, pulling dsDNA into and through the RuvAB complex. HJ branch migration allows RuvC to scan DNA until it finds its consensus sequence, where it cleaves and resolves the cruciform DNA. The chain is Holliday junction branch migration complex subunit RuvA from Colwellia psychrerythraea (strain 34H / ATCC BAA-681) (Vibrio psychroerythus).